A 149-amino-acid polypeptide reads, in one-letter code: MGLENSLILFSLLVLVLGWVQPSLGKESSPDKFKRQHMDTEGSSKSSPTYCNQMRSPQEMTKGSCKPVNTFLHEPLEDVQAICSQDKVTCKDGKSNCHKSSSTLHITDCCLKGSSNYPKCNYTTTESQKHIIIACDGNPYVPVHFDASV.

Positions 1-25 (MGLENSLILFSLLVLVLGWVQPSLG) are cleaved as a signal peptide. The tract at residues 25–62 (GKESSPDKFKRQHMDTEGSSKSSPTYCNQMRSPQEMTK) is disordered. Basic and acidic residues predominate over residues 28–42 (SSPDKFKRQHMDTEG). The substrate site is built by lysine 32 and arginine 35. The active-site Proton acceptor is the histidine 37. The span at 43 to 61 (SSKSSPTYCNQMRSPQEMT) shows a compositional bias: polar residues. Intrachain disulfides connect cysteine 51-cysteine 109, cysteine 65-cysteine 120, cysteine 83-cysteine 135, and cysteine 90-cysteine 97. Residues 66 to 70 (KPVNT) and lysine 91 contribute to the substrate site. Residue histidine 144 is the Proton donor of the active site.

The protein belongs to the pancreatic ribonuclease family. In terms of assembly, monomer. Interacts with and forms tight 1:1 complexes with RNH1. Dimerization of two such complexes may occur. Interaction with RNH1 inhibits this protein.

It is found in the secreted. The catalysed reaction is an [RNA] containing cytidine + H2O = an [RNA]-3'-cytidine-3'-phosphate + a 5'-hydroxy-ribonucleotide-3'-[RNA].. It carries out the reaction an [RNA] containing uridine + H2O = an [RNA]-3'-uridine-3'-phosphate + a 5'-hydroxy-ribonucleotide-3'-[RNA].. Functionally, endonuclease that catalyzes the cleavage of RNA on the 3' side of pyrimidine nucleotides. Acts on single-stranded and double-stranded RNA. This chain is Ribonuclease pancreatic (RNASE1), found in Sundamys muelleri (Mueller's giant sunda rat).